The following is a 154-amino-acid chain: Avirulence protein ATR13 (154 aa).

The first 19 residues, 1–19, serve as a signal peptide directing secretion; sequence MRLVHAVLLPGIIVFVSNG. Positions 38 to 41 match the RxLR motif; it reads RQLR. The interval 50–92 is leucine heptad repeat region; it reads LSRASFGLGKAQDPLDKFFSKIIFSGKPIETSYSAKGIHEKII. The tract at residues 93–103 is single repeat region; the sequence is EAHDLHVSKSK. The highly variable C-terminus domain stretch occupies residues 104–154; it reads NAPIQYASVMEYLKKTYPGPDIERIVSTLERHDEVGAKDLGAKLRDALDRQ.

The protein belongs to the RxLR effector family.

It localises to the secreted. It is found in the host cytoplasm. Functionally, secreted effector that acts as an elicitor of hypersensitive response (HR) specifically on plants carrying defense protein RPP13. Recognition of ATR13 by RPP13 initiates defense responses that are effective against oomycete, bacterial and viral pathogens. The allele ATR13-Emco5 recognizes RPP13-Nd, the RPP13 defense protein from Arabidopsis thaliana ecotype Niederzenz. The sequence is that of Avirulence protein ATR13 from Hyaloperonospora arabidopsidis (Peronospora arabidopsidis).